The following is a 104-amino-acid chain: AVIToxin-VAR1 (104 aa).

A signal peptide spans 1 to 19; that stretch reads MRSLLCAPLLLLLLSAGES. Cystine bridges form between C26–C38, C32–C50, C37–C78, C60–C86, and C80–C96.

This sequence belongs to the AVIT (prokineticin) family. Expressed by the venom gland.

The protein localises to the secreted. In terms of biological role, potent agonist for both PKR1/PROKR1 and PKR2/PROKR2. Potently contracts gastrointestinal (GI) smooth muscle. In Varanus varius (Lace monitor lizard), this protein is AVIToxin-VAR1.